The sequence spans 101 residues: Small ribosomal subunit protein uS14 (101 aa).

This sequence belongs to the universal ribosomal protein uS14 family. In terms of assembly, part of the 30S ribosomal subunit. Contacts proteins S3 and S10.

Binds 16S rRNA, required for the assembly of 30S particles and may also be responsible for determining the conformation of the 16S rRNA at the A site. The protein is Small ribosomal subunit protein uS14 of Methylibium petroleiphilum (strain ATCC BAA-1232 / LMG 22953 / PM1).